We begin with the raw amino-acid sequence, 118 residues long: Small ribosomal subunit protein uS13 (118 aa).

The tract at residues 94–118 (GLPVRGQRTKTNARTRKGPRKPIRK) is disordered.

It belongs to the universal ribosomal protein uS13 family. As to quaternary structure, part of the 30S ribosomal subunit. Forms a loose heterodimer with protein S19. Forms two bridges to the 50S subunit in the 70S ribosome.

Its function is as follows. Located at the top of the head of the 30S subunit, it contacts several helices of the 16S rRNA. In the 70S ribosome it contacts the 23S rRNA (bridge B1a) and protein L5 of the 50S subunit (bridge B1b), connecting the 2 subunits; these bridges are implicated in subunit movement. Contacts the tRNAs in the A and P-sites. The polypeptide is Small ribosomal subunit protein uS13 (Marinobacter nauticus (strain ATCC 700491 / DSM 11845 / VT8) (Marinobacter aquaeolei)).